Reading from the N-terminus, the 437-residue chain is GTPase Der (437 aa).

EngA-type G domains are found at residues 4–168 (NIVA…PEKP) and 178–353 (PRFA…ENRK). Residues 10-17 (GRPNVGKS), 57-61 (DTGGY), 120-123 (NKVD), 184-191 (GRPNAGKS), 231-235 (DTAGI), and 296-299 (NKWD) contribute to the GTP site. The KH-like domain maps to 354–437 (QRISTSKFNE…VPIDIYIREK (84 aa)).

This sequence belongs to the TRAFAC class TrmE-Era-EngA-EngB-Septin-like GTPase superfamily. EngA (Der) GTPase family. Associates with the 50S ribosomal subunit.

GTPase that plays an essential role in the late steps of ribosome biogenesis. This is GTPase Der from Flavobacterium johnsoniae (strain ATCC 17061 / DSM 2064 / JCM 8514 / BCRC 14874 / CCUG 350202 / NBRC 14942 / NCIMB 11054 / UW101) (Cytophaga johnsonae).